The sequence spans 502 residues: Glycerol kinase (502 aa).

Residue threonine 14 participates in ADP binding. 3 residues coordinate ATP: threonine 14, threonine 15, and serine 16. Threonine 14 contacts sn-glycerol 3-phosphate. Arginine 18 contacts ADP. Residues arginine 84, glutamate 85, tyrosine 136, and aspartate 246 each contribute to the sn-glycerol 3-phosphate site. Residues arginine 84, glutamate 85, tyrosine 136, aspartate 246, and glutamine 247 each coordinate glycerol. ADP-binding residues include threonine 268 and glycine 311. ATP-binding residues include threonine 268, glycine 311, glutamine 315, and glycine 412. ADP is bound by residues glycine 412 and asparagine 416.

It belongs to the FGGY kinase family. As to quaternary structure, homotetramer and homodimer (in equilibrium). Heterodimer with EIIA-Glc. Binds 1 zinc ion per glycerol kinase EIIA-Glc dimer. The zinc ion is important for dimerization.

It carries out the reaction glycerol + ATP = sn-glycerol 3-phosphate + ADP + H(+). The protein operates within polyol metabolism; glycerol degradation via glycerol kinase pathway; sn-glycerol 3-phosphate from glycerol: step 1/1. Its activity is regulated as follows. Activity of this regulatory enzyme is affected by several metabolites. Allosterically and non-competitively inhibited by fructose 1,6-bisphosphate (FBP) and unphosphorylated phosphocarrier protein EIIA-Glc (III-Glc), an integral component of the bacterial phosphotransferase (PTS) system. Its function is as follows. Key enzyme in the regulation of glycerol uptake and metabolism. Catalyzes the phosphorylation of glycerol to yield sn-glycerol 3-phosphate. This is Glycerol kinase from Salmonella arizonae (strain ATCC BAA-731 / CDC346-86 / RSK2980).